The sequence spans 186 residues: Large ribosomal subunit protein eL18 (186 aa).

Belongs to the eukaryotic ribosomal protein eL18 family. As to quaternary structure, component of the large ribosomal subunit. Mature ribosomes consist of a small (40S) and a large (60S) subunit. The 40S subunit contains about 32 different proteins and 1 molecule of RNA (18S). The 60S subunit contains 45 different proteins and 3 molecules of RNA (25S, 5.8S and 5S).

Its subcellular location is the cytoplasm. Component of the ribosome, a large ribonucleoprotein complex responsible for the synthesis of proteins in the cell. The small ribosomal subunit (SSU) binds messenger RNAs (mRNAs) and translates the encoded message by selecting cognate aminoacyl-transfer RNA (tRNA) molecules. The large subunit (LSU) contains the ribosomal catalytic site termed the peptidyl transferase center (PTC), which catalyzes the formation of peptide bonds, thereby polymerizing the amino acids delivered by tRNAs into a polypeptide chain. The nascent polypeptides leave the ribosome through a tunnel in the LSU and interact with protein factors that function in enzymatic processing, targeting, and the membrane insertion of nascent chains at the exit of the ribosomal tunnel. This chain is Large ribosomal subunit protein eL18, found in Candida albicans (strain SC5314 / ATCC MYA-2876) (Yeast).